The primary structure comprises 62 residues: Bowman-Birk type proteinase inhibitor B7 (62 aa).

Disulfide bonds link Cys-5-Cys-59, Cys-6-Cys-23, Cys-13-Cys-21, Cys-30-Cys-37, and Cys-34-Cys-51.

This sequence belongs to the Bowman-Birk serine protease inhibitor family. As to expression, expressed in bulb (at protein level).

Serine protease inhibitor. Inhibits trypsin (Ki = 65 nM) and weakly inhibits chymotrypsin (Ki = 295 nM). Does not inhibit bacterial subtilisin. This Hyacinthus orientalis (Common hyacinth) protein is Bowman-Birk type proteinase inhibitor B7.